Consider the following 527-residue polypeptide: NAD(P)H-quinone oxidoreductase chain 4 1 (527 aa).

Transmembrane regions (helical) follow at residues 5–25 (FPWL…LPII), 35–55 (WYSL…FCTG), 90–110 (LIIL…PVSF), 112–132 (PKLF…VFAV), 136–156 (LLFF…LSIW), 168–188 (FILY…TMAF), 211–231 (LLLY…FPLH), 242–262 (TAPA…YALL), 274–294 (AVFA…AALT), 310–330 (ISHM…GLSG), 331–351 (AVLQ…LVGA), 386–406 (LALP…GFAT), 416–436 (VLVI…LLSM), and 463–483 (VFII…PKIV).

The protein belongs to the complex I subunit 4 family.

The protein localises to the cellular thylakoid membrane. It carries out the reaction a plastoquinone + NADH + (n+1) H(+)(in) = a plastoquinol + NAD(+) + n H(+)(out). The catalysed reaction is a plastoquinone + NADPH + (n+1) H(+)(in) = a plastoquinol + NADP(+) + n H(+)(out). NDH-1 shuttles electrons from NAD(P)H, via FMN and iron-sulfur (Fe-S) centers, to quinones in the respiratory chain. The immediate electron acceptor for the enzyme in this species is believed to be plastoquinone. Couples the redox reaction to proton translocation (for every two electrons transferred, four hydrogen ions are translocated across the cytoplasmic membrane), and thus conserves the redox energy in a proton gradient. This is NAD(P)H-quinone oxidoreductase chain 4 1 from Trichodesmium erythraeum (strain IMS101).